A 124-amino-acid polypeptide reads, in one-letter code: Holo-[acyl-carrier-protein] synthase (124 aa).

2 residues coordinate Mg(2+): aspartate 7 and glutamate 55.

Belongs to the P-Pant transferase superfamily. AcpS family. The cofactor is Mg(2+).

It localises to the cytoplasm. It carries out the reaction apo-[ACP] + CoA = holo-[ACP] + adenosine 3',5'-bisphosphate + H(+). In terms of biological role, transfers the 4'-phosphopantetheine moiety from coenzyme A to a Ser of acyl-carrier-protein. The polypeptide is Holo-[acyl-carrier-protein] synthase (Borreliella burgdorferi (strain ATCC 35210 / DSM 4680 / CIP 102532 / B31) (Borrelia burgdorferi)).